The chain runs to 49 residues: Protein OPG059 (49 aa).

Residue M1 is a topological domain, virion surface. The helical transmembrane segment at 2–22 threads the bilayer; sequence VIGLVIFVSVAATIVGVLSNV. Residues 23-49 are Intravirion-facing; that stretch reads LDMIMYVEENNEEDAKIKEEQELLLLY.

It belongs to the orthopoxvirus OPG059 family.

It is found in the virion membrane. It localises to the host membrane. May play a role in cell adhesion and is important for virus virulence in vivo, although it is not required for the virus life cycle in cell cultures. The polypeptide is Protein OPG059 (OPG059) (Cynomys gunnisoni (Gunnison's prairie dog)).